Reading from the N-terminus, the 365-residue chain is Putrescine carbamoyltransferase (365 aa).

Residues 54–58, Arg-105, and His-132 each bind carbamoyl phosphate; that span reads STRTR. 277–280 is a binding site for putrescine; sequence HCLP.

It belongs to the aspartate/ornithine carbamoyltransferase superfamily. PTCase family. In terms of assembly, homotrimer.

The protein resides in the cytoplasm. It catalyses the reaction carbamoyl phosphate + putrescine = N-carbamoylputrescine + phosphate + H(+). It functions in the pathway amine and polyamine biosynthesis; putrescine biosynthesis via agmatine pathway; putrescine from N-carbamoylputrescine (transferase route): step 1/1. Its function is as follows. Catalyzes the phosphorolysis of N-carbamoylputrescine to form carbamoyl phosphate and putrescine. Is involved in the degradation pathway of the polyamine agmatine. This is Putrescine carbamoyltransferase from Mycoplasma capricolum subsp. capricolum (strain California kid / ATCC 27343 / NCTC 10154).